Reading from the N-terminus, the 29-residue chain is SIGSAFKKALPVAKKIGKAALPIAKAALP.

Homomer of four to six subunits.

The protein localises to the secreted. Its function is as follows. Female-specific peptides with potent activity against Gram-positive and Gram-negative bacteria. They have as well hemolytic activity. This chain is Ceratotoxin-B (CTXB), found in Ceratitis capitata (Mediterranean fruit fly).